Reading from the N-terminus, the 122-residue chain is Large ribosomal subunit protein uL14 (122 aa).

Belongs to the universal ribosomal protein uL14 family. In terms of assembly, part of the 50S ribosomal subunit. Forms a cluster with proteins L3 and L19. In the 70S ribosome, L14 and L19 interact and together make contacts with the 16S rRNA in bridges B5 and B8.

Binds to 23S rRNA. Forms part of two intersubunit bridges in the 70S ribosome. In Marinobacter nauticus (strain ATCC 700491 / DSM 11845 / VT8) (Marinobacter aquaeolei), this protein is Large ribosomal subunit protein uL14.